The primary structure comprises 702 residues: Transposon Tn7 transposition protein TnsB (702 aa).

The segment at 1–139 (MWQINEVVLF…GQTPNALIPD (139 aa)) is DNA-binding domain 1 (DBD1). The segment at residues 105 to 124 (VEHVVQEHKVTKATVYKLLR) is a DNA-binding region (H-T-H motif). Residues 137–160 (IPDYKNSGAPGERRSATGTAKIGR) form a disordered region. Residues 140 to 172 (YKNSGAPGERRSATGTAKIGRAREYGKGEGTKV) form a linker 1 region. A DNA-binding domain 2 (DBD2) region spans residues 173–233 (TPEIERLFRL…QFRYFYDREY (61 aa)). Residues 234–267 (PKAQRLKSRVKAGVYKKDVRPLSSTATSQALGPG) form a linker 2 region. The region spanning 262-480 (QALGPGSRYE…IPVQLWQWGM (219 aa)) is the Integrase catalytic domain. Positions 268–582 (SRYEIDATIA…RSRQFKGLSF (315 aa)) are catalytic domain (CD). Residues 589–702 (QAQEKHNKAN…FQDPPEKDES (114 aa)) are C-terminal domain. Positions 623 to 702 (KLTPSTTEPK…FQDPPEKDES (80 aa)) are disordered.

Heteromer with TnsA.

In terms of biological role, sequence-specific, DNA-binding protein required for Tn7 transposition. Recognizes sequences necessary for recombination at both left and right ends of Tn7 and, together with TnsA, forms the transposase. TnsB executes the 3'-DNA strand breakage and joining reactions. TnsB binding introduces DNA bending. There are 3 DNA-binding sites in the left and 4 in the right end of Tn7; as TnsB levels increase more TnsB is bound, suggesting high protein levels contribute to transposon immunity. Binding of TnsB to the transposon right end represses expression of the downstream transposition genes. TnsABC + TnsD promote high-frequency insertion of Tn7 into a specific target site known as att-Tn7 whereas TnsABC + TnsE promote low-frequency insertion into many different sites. The sequence is that of Transposon Tn7 transposition protein TnsB from Escherichia coli.